A 355-amino-acid polypeptide reads, in one-letter code: RNA 3'-terminal phosphate cyclase (355 aa).

ATP is bound by residues Q100 and 300–304 (HLADQ). H325 acts as the Tele-AMP-histidine intermediate in catalysis.

This sequence belongs to the RNA 3'-terminal cyclase family. Type 1 subfamily.

Its subcellular location is the cytoplasm. The enzyme catalyses a 3'-end 3'-phospho-ribonucleotide-RNA + ATP = a 3'-end 2',3'-cyclophospho-ribonucleotide-RNA + AMP + diphosphate. Its function is as follows. Catalyzes the conversion of 3'-phosphate to a 2',3'-cyclic phosphodiester at the end of RNA. The mechanism of action of the enzyme occurs in 3 steps: (A) adenylation of the enzyme by ATP; (B) transfer of adenylate to an RNA-N3'P to produce RNA-N3'PP5'A; (C) and attack of the adjacent 2'-hydroxyl on the 3'-phosphorus in the diester linkage to produce the cyclic end product. The biological role of this enzyme is unknown but it is likely to function in some aspects of cellular RNA processing. The polypeptide is RNA 3'-terminal phosphate cyclase (Methanosarcina acetivorans (strain ATCC 35395 / DSM 2834 / JCM 12185 / C2A)).